The chain runs to 751 residues: WD repeat-containing protein 91 (751 aa).

A coiled-coil region spans residues Gln-183–Glu-205. A disordered region spans residues Glu-237–Gln-398. Residues Leu-238–Ala-267 are compositionally biased toward polar residues. A compositionally biased stretch (basic and acidic residues) spans Thr-356–Thr-373. WD repeat units lie at residues Glu-410 to Ala-449, Ile-452 to Glu-492, Ser-517 to Gln-559, Pro-564 to Ser-603, Ala-606 to Ser-645, Val-668 to Glu-706, and Gly-713 to Ser-751.

It belongs to the WD repeat WDR91 family.

It localises to the early endosome membrane. The protein resides in the late endosome membrane. Functions as a negative regulator of the PI3 kinase/PI3K activity associated with endosomal membranes. By modifying the phosphatidylinositol 3-phosphate/PtdInsP3 content of endosomal membranes may regulate endosome fusion, recycling, sorting and early to late endosome transport. In Xenopus tropicalis (Western clawed frog), this protein is WD repeat-containing protein 91.